Here is a 192-residue protein sequence, read N- to C-terminus: Orotate phosphoribosyltransferase (192 aa).

5-phospho-alpha-D-ribose 1-diphosphate is bound by residues arginine 84, lysine 88, and 110 to 118; that span reads DDVLTTGNS. Orotate-binding residues include threonine 114 and arginine 142.

This sequence belongs to the purine/pyrimidine phosphoribosyltransferase family. PyrE subfamily. In terms of assembly, homodimer. The cofactor is Mg(2+).

The catalysed reaction is orotidine 5'-phosphate + diphosphate = orotate + 5-phospho-alpha-D-ribose 1-diphosphate. It functions in the pathway pyrimidine metabolism; UMP biosynthesis via de novo pathway; UMP from orotate: step 1/2. In terms of biological role, catalyzes the transfer of a ribosyl phosphate group from 5-phosphoribose 1-diphosphate to orotate, leading to the formation of orotidine monophosphate (OMP). This Pyrobaculum calidifontis (strain DSM 21063 / JCM 11548 / VA1) protein is Orotate phosphoribosyltransferase.